A 451-amino-acid polypeptide reads, in one-letter code: tRNA-2-methylthio-N(6)-dimethylallyladenosine synthase (451 aa).

The region spanning 1-116 (MTYFFETYGC…LPQIFDEIKA (116 aa)) is the MTTase N-terminal domain. Residues Cys10, Cys46, Cys79, Cys162, Cys166, and Cys169 each contribute to the [4Fe-4S] cluster site. The Radical SAM core domain maps to 148–384 (SPKSFQSYVP…IDLQLKITAK (237 aa)). The TRAM domain maps to 387 to 451 (KAKLGKKVDI…KGKTFRANLN (65 aa)).

Belongs to the methylthiotransferase family. MiaB subfamily. Monomer. It depends on [4Fe-4S] cluster as a cofactor.

Its subcellular location is the cytoplasm. The catalysed reaction is N(6)-dimethylallyladenosine(37) in tRNA + (sulfur carrier)-SH + AH2 + 2 S-adenosyl-L-methionine = 2-methylsulfanyl-N(6)-dimethylallyladenosine(37) in tRNA + (sulfur carrier)-H + 5'-deoxyadenosine + L-methionine + A + S-adenosyl-L-homocysteine + 2 H(+). Catalyzes the methylthiolation of N6-(dimethylallyl)adenosine (i(6)A), leading to the formation of 2-methylthio-N6-(dimethylallyl)adenosine (ms(2)i(6)A) at position 37 in tRNAs that read codons beginning with uridine. The sequence is that of tRNA-2-methylthio-N(6)-dimethylallyladenosine synthase from Treponema denticola (strain ATCC 35405 / DSM 14222 / CIP 103919 / JCM 8153 / KCTC 15104).